The primary structure comprises 387 residues: Cysteine desulfurase (387 aa).

Pyridoxal 5'-phosphate is bound by residues 72 to 73 (GT), Asn152, Gln180, and 200 to 202 (SAH). Position 203 is an N6-(pyridoxal phosphate)lysine (Lys203). Thr238 is a binding site for pyridoxal 5'-phosphate. Residue Cys323 is the Cysteine persulfide intermediate of the active site. Position 323 (Cys323) interacts with [2Fe-2S] cluster.

Belongs to the class-V pyridoxal-phosphate-dependent aminotransferase family. NifS/IscS subfamily. As to quaternary structure, homodimer. Requires pyridoxal 5'-phosphate as cofactor.

The catalysed reaction is (sulfur carrier)-H + L-cysteine = (sulfur carrier)-SH + L-alanine. Its function is as follows. Catalyzes the removal of elemental sulfur atoms from cysteine to produce alanine. Seems to participate in the biosynthesis of the nitrogenase metalloclusters by providing the inorganic sulfur required for the Fe-S core formation. This Cereibacter sphaeroides (Rhodobacter sphaeroides) protein is Cysteine desulfurase.